Consider the following 371-residue polypeptide: Glycerate kinase (371 aa).

The protein belongs to the glycerate kinase type-1 family.

It carries out the reaction (R)-glycerate + ATP = (2R)-3-phosphoglycerate + ADP + H(+). The polypeptide is Glycerate kinase (glxK) (Neisseria meningitidis serogroup B (strain ATCC BAA-335 / MC58)).